The chain runs to 365 residues: Protein BZR1 homolog 2 (365 aa).

Residues 1 to 30 (MATGGGGGGGGMGGGGVGGGAGAAGVGVGG) show a composition bias toward gly residues. Disordered stretches follow at residues 1–45 (MATG…KRRE), 113–154 (SPSP…NMAN), 191–236 (SAPV…TPPS), and 344–365 (HEDS…RAAA). The segment at 31–113 (RMPTWREREN…RMEVIGCSVS (83 aa)) is required for DNA-binding. Positions 113 to 144 (SPSPCSSYQPSPRASYNASPTSSSFPSGASSP) are enriched in low complexity. 2 stretches are compositionally biased toward polar residues: residues 215-233 (SNVQ…VNST) and 356-365 (LGSSRTRAAA).

This sequence belongs to the BZR/LAT61 family. As to quaternary structure, interacts with PUB24.

Functionally, may function in brassinosteroid signaling. This is Protein BZR1 homolog 2 from Oryza sativa subsp. japonica (Rice).